A 213-amino-acid chain; its full sequence is Vacuolar protein sorting-associated protein 32 homolog 1 (213 aa).

Coiled coils occupy residues 11–42 (KQETSTLQTLDKLNETLEMLEKKENVLLKKAT) and 118–176 (TNID…QLLQ). The disordered stretch occupies residues 180–213 (IHVPQGNKPARAPAQKQPTAEEDELAALQAEMAL).

Belongs to the SNF7 family. In terms of assembly, component of the endosomal sorting required for transport complex III (ESCRT-III), composed at least of VPS2, VPS20, VPS24 and VPS32. Interacts with SKD1. Interacts with BRO1/ALIX.

It localises to the endosome. In terms of biological role, component of the ESCRT-III complex, which is required for multivesicular bodies (MVBs) formation and sorting of endosomal cargo proteins into MVBs. The ESCRT-III complex is probably involved in the concentration of MVB cargo. In Arabidopsis thaliana (Mouse-ear cress), this protein is Vacuolar protein sorting-associated protein 32 homolog 1 (VPS32.1).